A 191-amino-acid polypeptide reads, in one-letter code: UPF0302 protein USA300HOU_1400 (191 aa).

The protein belongs to the UPF0302 family.

This Staphylococcus aureus (strain USA300 / TCH1516) protein is UPF0302 protein USA300HOU_1400.